The following is a 717-amino-acid chain: Inhibitor of nuclear factor kappa-B kinase subunit epsilon (717 aa).

One can recognise a Protein kinase domain in the interval 9–315; it reads WHTDDLLGQG…LQRTVIHVFS (307 aa). Position 15–23 (15–23) interacts with ATP; the sequence is LGQGATASV. Lys-30 is covalently cross-linked (Glycyl lysine isopeptide (Lys-Gly) (interchain with G-Cter in ubiquitin)). Lys-38 serves as a coordination point for ATP. The active-site Proton acceptor is Asp-135. A Phosphoserine; by autocatalysis and IKKB modification is found at Ser-172. Lys-231 participates in a covalent cross-link: Glycyl lysine isopeptide (Lys-Gly) (interchain with G-Cter in SUMO1). Residues 385 to 650 are interaction with DDX3X; it reads SSDTPKGLAF…AQESLNKIFD (266 aa). Lys-403 participates in a covalent cross-link: Glycyl lysine isopeptide (Lys-Gly) (interchain with G-Cter in ubiquitin). The interval 452 to 473 is leucine-zipper; sequence LQDTCQQTLEVTRTALLYLSSS. Residue Thr-503 is modified to Phosphothreonine. Ser-665 is subject to Phosphoserine.

This sequence belongs to the protein kinase superfamily. Ser/Thr protein kinase family. I-kappa-B kinase subfamily. As to quaternary structure, homodimer. Interacts with MAVS/IPS1. Interacts (via protein kinase domain) with TTLL12 (via N-terminus); the interaction prevents MAVS binding to IKBKE. Interacts with the adapter proteins AZI2/NAP1, TANK and TBKBP1/SINTBAD. Interacts with SIKE1. Interacts with TICAM1/TRIF, IRF3 and RIGI; interactions are disrupted by the interaction between IKBKE and SIKE1. Interacts with TOPORS; induced by DNA damage. Interacts with CYLD, IKBKB, IKBKG and MYD88. Interacts with IFIH1. Interacts with DDX3X; the interaction may be induced upon virus infection. Interacts with TRIM6 (via SPRY box). Interacts with unanchored K48-linked polyubiquitin chains; this leads to IKBKE activation. Interacts with TBK1. Interacts with FKBP5. Sumoylation by TOPORS upon DNA damage is required for protection of cells against DNA damage-induced cell death. Desumoylated by SENP1. Post-translationally, autophosphorylated and phosphorylated by IKBKB/IKKB. Phosphorylation at Ser-172 is enhanced by the interaction with DDX3X. Phosphorylated at Thr-503 upon IFN activation. In terms of processing, 'Lys-63'-linked polyubiquitinated at Lys-30 and Lys-403 by TRAF2:BIRC2 and TRAF2:BIRC3 complexes. Ubiquitination is induced by LPS, TNFA and interleukin-1 and required for full kinase activity and KF-kappa-B pathway activation. Expressed in bone marrow-derived macrophages and at low levels in liver and white adipose tissue (at protein level). Detected in muscle and lung.

The protein resides in the cytoplasm. Its subcellular location is the nucleus. It is found in the PML body. The catalysed reaction is L-seryl-[I-kappa-B protein] + ATP = O-phospho-L-seryl-[I-kappa-B protein] + ADP + H(+). With respect to regulation, kinase activity is inhibited competitively by amlexanox. Its function is as follows. Serine/threonine kinase that plays an essential role in regulating inflammatory responses to viral infection, through the activation of the type I IFN, NF-kappa-B and STAT signaling. Also involved in TNFA and inflammatory cytokines, like Interleukin-1, signaling. Following activation of viral RNA sensors, such as RIG-I-like receptors, associates with DDX3X and phosphorylates interferon regulatory factors (IRFs), IRF3 and IRF7, as well as DDX3X. This activity allows subsequent homodimerization and nuclear translocation of the IRF3 leading to transcriptional activation of pro-inflammatory and antiviral genes including IFNB. In order to establish such an antiviral state, IKBKE forms several different complexes whose composition depends on the type of cell and cellular stimuli. Thus, several scaffolding molecules including IPS1/MAVS, TANK, AZI2/NAP1 or TBKBP1/SINTBAD can be recruited to the IKBKE-containing-complexes. Activated by polyubiquitination in response to TNFA and interleukin-1, regulates the NF-kappa-B signaling pathway through, at least, the phosphorylation of CYLD. Phosphorylates inhibitors of NF-kappa-B thus leading to the dissociation of the inhibitor/NF-kappa-B complex and ultimately the degradation of the inhibitor. In addition, is also required for the induction of a subset of ISGs which displays antiviral activity, may be through the phosphorylation of STAT1 at 'Ser-708'. Phosphorylation of STAT1 at 'Ser-708' also seems to promote the assembly and DNA binding of ISGF3 (STAT1:STAT2:IRF9) complexes compared to GAF (STAT1:STAT1) complexes, in this way regulating the balance between type I and type II IFN responses. Protects cells against DNA damage-induced cell death. Also plays an important role in energy balance regulation by sustaining a state of chronic, low-grade inflammation in obesity, wich leads to a negative impact on insulin sensitivity. Phosphorylates AKT1. The chain is Inhibitor of nuclear factor kappa-B kinase subunit epsilon (Ikbke) from Mus musculus (Mouse).